The following is a 183-amino-acid chain: Peptidyl-tRNA hydrolase (183 aa).

Tyr-14 contacts tRNA. His-19 functions as the Proton acceptor in the catalytic mechanism. TRNA is bound by residues Phe-64 and Asn-66.

Belongs to the PTH family. As to quaternary structure, monomer.

The protein localises to the cytoplasm. It catalyses the reaction an N-acyl-L-alpha-aminoacyl-tRNA + H2O = an N-acyl-L-amino acid + a tRNA + H(+). Its function is as follows. Hydrolyzes ribosome-free peptidyl-tRNAs (with 1 or more amino acids incorporated), which drop off the ribosome during protein synthesis, or as a result of ribosome stalling. Catalyzes the release of premature peptidyl moieties from peptidyl-tRNA molecules trapped in stalled 50S ribosomal subunits, and thus maintains levels of free tRNAs and 50S ribosomes. This is Peptidyl-tRNA hydrolase from Syntrophomonas wolfei subsp. wolfei (strain DSM 2245B / Goettingen).